The chain runs to 558 residues: SPATS2-like protein (558 aa).

Residue Ala-2 is modified to N-acetylalanine. Positions 63–79 (GKKKNNKRKRSKSKQHQ) are enriched in basic residues. 2 disordered regions span residues 63-148 (GKKK…RGIT) and 161-202 (DGNP…SNAP). Composition is skewed to basic and acidic residues over residues 80 to 92 (GNKD…ERPE) and 110 to 142 (GCEK…EPPR). Position 120 is a phosphoserine (Ser-120). Positions 279-344 (KEEAMDILTA…ARFSCDIEQL (66 aa)) form a coiled coil. The segment at 383 to 514 (KQGNFSRKSS…SEKARRRQHA (132 aa)) is disordered. Residues 416–433 (DACQQTMPTNKQQNGPSN) show a composition bias toward polar residues. Position 455 is a phosphoserine (Ser-455). Basic residues predominate over residues 469 to 485 (HEHRRQPHNGFRPKNKG).

The protein belongs to the SPATS2 family.

It localises to the cytoplasm. Its subcellular location is the nucleus. The protein localises to the nucleolus. The polypeptide is SPATS2-like protein (Spats2l) (Rattus norvegicus (Rat)).